Reading from the N-terminus, the 130-residue chain is Large ribosomal subunit protein bL20 (130 aa).

This sequence belongs to the bacterial ribosomal protein bL20 family.

Binds directly to 23S ribosomal RNA and is necessary for the in vitro assembly process of the 50S ribosomal subunit. It is not involved in the protein synthesizing functions of that subunit. The protein is Large ribosomal subunit protein bL20 of Clavibacter sepedonicus (Clavibacter michiganensis subsp. sepedonicus).